A 139-amino-acid chain; its full sequence is Small ribosomal subunit protein uS9 (139 aa).

This sequence belongs to the universal ribosomal protein uS9 family.

The protein is Small ribosomal subunit protein uS9 of Coxiella burnetii (strain CbuK_Q154) (Coxiella burnetii (strain Q154)).